The sequence spans 320 residues: Mitochondrial glutamate carrier 2 (320 aa).

Solcar repeat units lie at residues 11–97, 105–215, and 224–313; these read LSIS…LRQL, RNLK…LNQL, and ASFT…GIGE. Helical transmembrane passes span 17-37, 66-86, and 110-128; these read LINGGIAGLVGVTCVFPIDLA, FLGMYRGAAVNLTLVTPEKAI, and EMLAGCGAGICQVVITCPM. Serine 150 bears the Phosphoserine mark. 3 helical membrane-spanning segments follow: residues 190 to 210, 230 to 250, and 293 to 313; these read GLGATLLRDIPFSIIYFPLFA, FVAGCTAGSVAAVAVTPLDVL, and ALVIAPLFGIAQGVYFIGIGE.

It belongs to the mitochondrial carrier (TC 2.A.29) family.

Its subcellular location is the mitochondrion inner membrane. It carries out the reaction L-glutamate(in) + H(+)(in) = L-glutamate(out) + H(+)(out). Its function is as follows. Responsible for the transport of glutamate from the cytosol into the mitochondrial matrix with the concomitant import of a proton (symport system). This chain is Mitochondrial glutamate carrier 2 (Slc25a18), found in Mus musculus (Mouse).